The primary structure comprises 375 residues: Succinyl-diaminopimelate desuccinylase (375 aa).

His66 serves as a coordination point for Zn(2+). The active site involves Asp68. Position 99 (Asp99) interacts with Zn(2+). Catalysis depends on Glu133, which acts as the Proton acceptor. Glu134, Glu162, and His348 together coordinate Zn(2+).

It belongs to the peptidase M20A family. DapE subfamily. As to quaternary structure, homodimer. Zn(2+) serves as cofactor. Co(2+) is required as a cofactor.

It carries out the reaction N-succinyl-(2S,6S)-2,6-diaminopimelate + H2O = (2S,6S)-2,6-diaminopimelate + succinate. Its pathway is amino-acid biosynthesis; L-lysine biosynthesis via DAP pathway; LL-2,6-diaminopimelate from (S)-tetrahydrodipicolinate (succinylase route): step 3/3. Its function is as follows. Catalyzes the hydrolysis of N-succinyl-L,L-diaminopimelic acid (SDAP), forming succinate and LL-2,6-diaminopimelate (DAP), an intermediate involved in the bacterial biosynthesis of lysine and meso-diaminopimelic acid, an essential component of bacterial cell walls. The polypeptide is Succinyl-diaminopimelate desuccinylase (Shigella flexneri serotype 5b (strain 8401)).